The sequence spans 99 residues: Malonate decarboxylase acyl carrier protein (99 aa).

O-(phosphoribosyl dephospho-coenzyme A)serine is present on Ser-25.

This sequence belongs to the MdcC family. Covalently binds the prosthetic group of malonate decarboxylase.

The protein resides in the cytoplasm. Its function is as follows. Subunit of malonate decarboxylase, it is an acyl carrier protein to which acetyl and malonyl thioester residues are bound via a 2'-(5''-phosphoribosyl)-3'-dephospho-CoA prosthetic group and turn over during the catalytic mechanism. This chain is Malonate decarboxylase acyl carrier protein, found in Pseudomonas aeruginosa (strain LESB58).